The chain runs to 447 residues: Cobyrinate a,c-diamide synthase (447 aa).

One can recognise a GATase cobBQ-type domain in the interval 252-439 (KIAVAFDESF…AHQHCIGNPY (188 aa)). Cys-331 functions as the Nucleophile in the catalytic mechanism.

The protein belongs to the CobB/CbiA family. Requires Mg(2+) as cofactor.

It carries out the reaction cob(II)yrinate + 2 L-glutamine + 2 ATP + 2 H2O = cob(II)yrinate a,c diamide + 2 L-glutamate + 2 ADP + 2 phosphate + 2 H(+). The catalysed reaction is Ni-sirohydrochlorin + 2 L-glutamine + 2 ATP + 2 H2O = Ni-sirohydrochlorin a,c-diamide + 2 L-glutamate + 2 ADP + 2 phosphate + 2 H(+). Its pathway is cofactor biosynthesis; adenosylcobalamin biosynthesis; cob(II)yrinate a,c-diamide from sirohydrochlorin (anaerobic route): step 10/10. Functionally, catalyzes the ATP-dependent amidation of the two carboxylate groups at positions a and c of cobyrinate, using either L-glutamine or ammonia as the nitrogen source. Involved in the biosynthesis of the unique nickel-containing tetrapyrrole coenzyme F430, the prosthetic group of methyl-coenzyme M reductase (MCR), which plays a key role in methanogenesis and anaerobic methane oxidation. Catalyzes the ATP-dependent amidation of the two carboxylate groups at positions a and c of Ni-sirohydrochlorin, using L-glutamine or ammonia as the nitrogen source. This is Cobyrinate a,c-diamide synthase from Methanococcus maripaludis (strain C5 / ATCC BAA-1333).